The sequence spans 135 residues: Mediator of RNA polymerase II transcription subunit 10 (135 aa).

It belongs to the Mediator complex subunit 10 family. As to quaternary structure, component of the Mediator complex, which is composed of MED1, MED4, MED6, MED7, MED8, MED9, MED10, MED11, MED12, MED13, MED13L, MED14, MED15, MED16, MED17, MED18, MED19, MED20, MED21, MED22, MED23, MED24, MED25, MED26, MED27, MED29, MED30, MED31, CCNC, CDK8 and CDC2L6/CDK11. The MED12, MED13, CCNC and CDK8 subunits form a distinct module termed the CDK8 module. Mediator containing the CDK8 module is less active than Mediator lacking this module in supporting transcriptional activation. Individual preparations of the Mediator complex lacking one or more distinct subunits have been variously termed ARC, CRSP, DRIP, PC2, SMCC and TRAP.

Its subcellular location is the nucleus. Its function is as follows. Component of the Mediator complex, a coactivator involved in the regulated transcription of nearly all RNA polymerase II-dependent genes. Mediator functions as a bridge to convey information from gene-specific regulatory proteins to the basal RNA polymerase II transcription machinery. Mediator is recruited to promoters by direct interactions with regulatory proteins and serves as a scaffold for the assembly of a functional preinitiation complex with RNA polymerase II and the general transcription factors. In Homo sapiens (Human), this protein is Mediator of RNA polymerase II transcription subunit 10 (MED10).